A 318-amino-acid polypeptide reads, in one-letter code: MNKSFILSTGSYLPRKMLSNNEIASIVETSDEWIRQRTGIVQRHIADEGELTSDLAVNAAKSAIEKAKISVDEIDLIIVATTTPDKTFPSCATIVQSKLKCKNAFAFDVQAACSGFIYAVTVADSLIKSNNRIKYALVIGAEIMSRIVDWEDRSTCVLFGDGAGAVVMKSEMGRSGIISTNLYSDGNVDILCTNGGISSTGDSGKICMNGREVFKHAVDKLTASVEETLKCNNLKITDIDWLIPHQANIRIIEAVVKKLDFPIEKVINTVDKHANTSAASIPLALDYAIQESKIKSGNLVLLISIGAGLTWGSVLLHY.

Catalysis depends on residues Cys113 and His245. Positions 246–250 are ACP-binding; the sequence is QANIR. Asn275 is a catalytic residue.

Belongs to the thiolase-like superfamily. FabH family. In terms of assembly, homodimer.

It is found in the cytoplasm. It carries out the reaction malonyl-[ACP] + acetyl-CoA + H(+) = 3-oxobutanoyl-[ACP] + CO2 + CoA. It functions in the pathway lipid metabolism; fatty acid biosynthesis. Functionally, catalyzes the condensation reaction of fatty acid synthesis by the addition to an acyl acceptor of two carbons from malonyl-ACP. Catalyzes the first condensation reaction which initiates fatty acid synthesis and may therefore play a role in governing the total rate of fatty acid production. Possesses both acetoacetyl-ACP synthase and acetyl transacylase activities. Its substrate specificity determines the biosynthesis of branched-chain and/or straight-chain of fatty acids. The sequence is that of Beta-ketoacyl-[acyl-carrier-protein] synthase III from Wolbachia pipientis wMel.